We begin with the raw amino-acid sequence, 279 residues long: Phosphatidylglycerol--prolipoprotein diacylglyceryl transferase (279 aa).

The next 7 helical transmembrane spans lie at 22–42 (SAHW…WSSI), 58–78 (ILYF…VIFY), 89–109 (FIFK…GSII), 128–148 (FLVP…FING), 195–215 (ISQL…LNIF), 223–243 (GYMS…AEFF), and 256–276 (YISL…ILII). Residue arginine 141 coordinates a 1,2-diacyl-sn-glycero-3-phospho-(1'-sn-glycerol).

Belongs to the Lgt family.

It is found in the cell membrane. It catalyses the reaction L-cysteinyl-[prolipoprotein] + a 1,2-diacyl-sn-glycero-3-phospho-(1'-sn-glycerol) = an S-1,2-diacyl-sn-glyceryl-L-cysteinyl-[prolipoprotein] + sn-glycerol 1-phosphate + H(+). The protein operates within protein modification; lipoprotein biosynthesis (diacylglyceryl transfer). In terms of biological role, catalyzes the transfer of the diacylglyceryl group from phosphatidylglycerol to the sulfhydryl group of the N-terminal cysteine of a prolipoprotein, the first step in the formation of mature lipoproteins. This chain is Phosphatidylglycerol--prolipoprotein diacylglyceryl transferase, found in Wigglesworthia glossinidia brevipalpis.